The sequence spans 157 residues: Ribonuclease H (157 aa).

One can recognise an RNase H type-1 domain in the interval methionine 1 to lysine 142. Positions 10, 48, 70, and 134 each coordinate Mg(2+).

It belongs to the RNase H family. As to quaternary structure, monomer. It depends on Mg(2+) as a cofactor.

Its subcellular location is the cytoplasm. The enzyme catalyses Endonucleolytic cleavage to 5'-phosphomonoester.. Functionally, endonuclease that specifically degrades the RNA of RNA-DNA hybrids. The polypeptide is Ribonuclease H (Wigglesworthia glossinidia brevipalpis).